Reading from the N-terminus, the 187-residue chain is Putative type I specificity subunit S.MpnORF289P N-terminus (187 aa).

Belongs to the type-I restriction system S methylase family. The methyltransferase is composed of M and S polypeptides.

In terms of biological role, the N-terminal section of a specificity (S) subunit of a type I methyltransferase (MTase); this subunit dictates DNA sequence specificity. The single R subunit has multiple frameshifts and is probably not expressed. This chain is Putative type I specificity subunit S.MpnORF289P N-terminus, found in Mycoplasma pneumoniae (strain ATCC 29342 / M129 / Subtype 1) (Mycoplasmoides pneumoniae).